Reading from the N-terminus, the 286-residue chain is NADPH-dependent 7-cyano-7-deazaguanine reductase (286 aa).

Position 88–90 (88–90) interacts with substrate; it reads VES. NADPH is bound at residue 90 to 91; the sequence is SK. The Thioimide intermediate role is filled by Cys-194. Asp-201 (proton donor) is an active-site residue. Substrate is bound at residue 233–234; that stretch reads HE. 262 to 263 is a binding site for NADPH; that stretch reads RG.

It belongs to the GTP cyclohydrolase I family. QueF type 2 subfamily. As to quaternary structure, homodimer.

The protein localises to the cytoplasm. It carries out the reaction 7-aminomethyl-7-carbaguanine + 2 NADP(+) = 7-cyano-7-deazaguanine + 2 NADPH + 3 H(+). The protein operates within tRNA modification; tRNA-queuosine biosynthesis. Functionally, catalyzes the NADPH-dependent reduction of 7-cyano-7-deazaguanine (preQ0) to 7-aminomethyl-7-deazaguanine (preQ1). The sequence is that of NADPH-dependent 7-cyano-7-deazaguanine reductase from Colwellia psychrerythraea (strain 34H / ATCC BAA-681) (Vibrio psychroerythus).